The following is a 76-amino-acid chain: Probable insulin-like peptide alpha-type 3 (76 aa).

The N-terminal stretch at 1-18 (MFVLLIILSIILAQVTDA) is a signal peptide. 3 cysteine pairs are disulfide-bonded: cysteine 28–cysteine 58, cysteine 40–cysteine 71, and cysteine 46–cysteine 72.

Belongs to the insulin family.

Its subcellular location is the secreted. This chain is Probable insulin-like peptide alpha-type 3 (ins-23), found in Caenorhabditis elegans.